Here is a 430-residue protein sequence, read N- to C-terminus: Resistance to inhibitors of cholinesterase protein 19 (430 aa).

An AH domain is found at Ala56–Glu260. The disordered stretch occupies residues Gly279–Glu342. Positions Lys281 to Ala294 are enriched in basic and acidic residues.

In terms of assembly, interacts with the GTPase activator protein tbc-8; the interaction is direct and may be required for the activation of rab-2 and dense vesicle maturation in cholinergic motoneurons. Interacts with rund-1. Expressed in all neurons. Highly expressed in m2 pharyngeal neurons and some pharyngeal interneurons. Also expressed in the excretory canal and the gland cells located just below the nerve ring in the head.

The protein localises to the cytoplasm. It is found in the cytoplasmic vesicle membrane. Functionally, may be involved in neurotransmitter secretion. In association with the GTPase activator protein tbc-8 activates rab-2 during dense core vesicle maturation in cholinergic motoneurons. In Caenorhabditis elegans, this protein is Resistance to inhibitors of cholinesterase protein 19.